The primary structure comprises 435 residues: GTPase Der (435 aa).

EngA-type G domains are found at residues 3-168 (PLVA…PDET) and 176-351 (IKLA…QNRQ). GTP contacts are provided by residues 9–16 (GRPNVGKS), 56–60 (DTGGY), 120–123 (NKVE), 182–189 (GRPNVGKS), 229–233 (DTAGL), and 294–297 (NKWD). The KH-like domain occupies 352 to 435 (KKISTSELNR…VPVSFRYRKK (84 aa)).

The protein belongs to the TRAFAC class TrmE-Era-EngA-EngB-Septin-like GTPase superfamily. EngA (Der) GTPase family. Associates with the 50S ribosomal subunit.

GTPase that plays an essential role in the late steps of ribosome biogenesis. In Chlorobium phaeobacteroides (strain BS1), this protein is GTPase Der.